The chain runs to 275 residues: Voltage-dependent calcium channel gamma-5 subunit (275 aa).

The next 4 membrane-spanning stretches (helical) occupy residues 8-28 (ALTL…GIAV), 103-123 (FPLV…IGHI), 129-149 (ILAF…VVGL), and 181-201 (FAAI…YLFM).

Belongs to the PMP-22/EMP/MP20 family. CACNG subfamily. As to quaternary structure, the L-type calcium channel is composed of five subunits: alpha-1, alpha-2/delta, beta and gamma. Acts as an auxiliary subunit for AMPA-selective glutamate receptors (AMPARs). Found in a complex with GRIA1, GRIA2, GRIA3, GRIA4, CNIH2, CNIH3, CACNG2, CACNG3, CACNG4, CACNG7 and CACNG8. Interacts with GRIA1, GRIA2, GRIA3 and GRIA4.

It localises to the membrane. The protein resides in the postsynaptic density membrane. Its function is as follows. Regulates the gating properties of AMPA-selective glutamate receptors (AMPARs). Modulates their gating properties by accelerating their rates of activation, deactivation and desensitization. Displays subunit-specific AMPA receptor regulation. Shows specificity for GRIA1, GRIA4 and the long isoform of GRIA2. According to PubMed:18817736, shows only specificity for GRIA2 and specifically to the form of GRIA2 for which a single amino acid in the pore region has been edited from a glutamine to an arginine residue. Thought to stabilize the calcium channel in an inactivated (closed) state. The protein is Voltage-dependent calcium channel gamma-5 subunit (Cacng5) of Rattus norvegicus (Rat).